The sequence spans 248 residues: MGPVRLGILLFLFLAVHEAWAGMLKEEDDDTERLPSKCEVCKLLSTELQAELSRTGRSREVLELGQVLDTGKRKRHVPYSVSETRLEEALENLCERILDYSVHAERKGSLRYAKGQSQTMATLKGLVQKGVKVDLGIPLELWDEPSVEVTYLKKQCETMLEEFEDIVGDWYFHHQEQPLQNFLCEGHVLPAAETACLQETWTGKEITDGEEKTEGEEEQEEEEEEEEEEGGDKMTKTGSHPKLDREDL.

A signal peptide spans 1–21 (MGPVRLGILLFLFLAVHEAWA). Intrachain disulfides connect Cys38–Cys196, Cys41–Cys184, and Cys94–Cys156. Residues 200–248 (TWTGKEITDGEEKTEGEEEQEEEEEEEEEEGGDKMTKTGSHPKLDREDL) are disordered. The span at 213–230 (TEGEEEQEEEEEEEEEEG) shows a compositional bias: acidic residues. Residues 231–248 (GDKMTKTGSHPKLDREDL) show a composition bias toward basic and acidic residues.

Belongs to the canopy family. Interacts with TLR4.

It localises to the secreted. Plays a role in the regulation of the cell surface expression of TLR4. In Homo sapiens (Human), this protein is Protein canopy homolog 4 (CNPY4).